The chain runs to 642 residues: Regulator of MON1-CCZ1 complex (642 aa).

One can recognise a Mic1 domain in the interval 462 to 616 (RPYTESILML…KLYETLSFPK (155 aa)).

This sequence belongs to the RMC1 family. In terms of assembly, component of the Mon1-Ccz1 guanyl-nucleotide exchange factor complex made up of Mon1, Ccz1 and Bulli; the interaction of Bulli with the Mon1-Ccz1 heterodimer is mediated via the C-terminal Mic1 domain of Bulli. Mon1 and Ccz1 form a stable complex which displays Rab7 GEF activity with or without Bulli; GEF activity is enhanced by Bulli possibly by improving membrane association of the complex.

The protein localises to the late endosome. Its function is as follows. Positive regulator of the Rab7 guanyl-nucleotide exchange activity of the Mon1-Ccz1 complex, possibly by enhancing its endosomal membrane association. As part of the Mon1-Ccz1 complex involved in endolysosomal biogenesis possibly by mediating Rab conversion, the replacement of Rab5 with Rab7 during late endosome maturation. The sequence is that of Regulator of MON1-CCZ1 complex from Drosophila melanogaster (Fruit fly).